The primary structure comprises 506 residues: FAD-linked oxidoreductase chry5 (506 aa).

The N-terminal stretch at 1 to 17 (MHLQALTGLATLAVTAA) is a signal peptide. Positions 59–241 (LDKPTVNIVA…TSVTSKTYDA (183 aa)) constitute an FAD-binding PCMH-type domain. N205, N272, N281, N389, and N431 each carry an N-linked (GlcNAc...) asparagine glycan.

The protein belongs to the oxygen-dependent FAD-linked oxidoreductase family. It depends on FAD as a cofactor.

It functions in the pathway pigment biosynthesis. FAD-linked oxidoreductase; part of the gene cluster that mediates the biosynthesis of the yellow pigment chrysogine. Pyruvic acid and anthranilic acid are likely substrates for the nonribosomal peptide synthetase chry1/NRPS14, with pyruvic acid adenylated by the first A domain and anthranilic acid by the second. If pyruvic acid and anthranilic acid are merged and released from chry1/NRPS14 by hydrolysis, a subsequent amidation would lead to 2-pyruvoylaminobenzamide. This process is probably catalyzed by the amidotransferase chry2 using glutamine as amino donor. The dehydrogenase chry5 that has a terminal berberine bridge domain for C-N cyclization could catalyze the cyclization of 2-pyruvoylaminobenzamide to yield acetyl-4(3H)-quinazolidinone. A final reduction of acetyl-4(3H)-quinazolidinone catalyzed by the oxidoreductase chry4 would result in chrysogine. This Gibberella zeae (strain ATCC MYA-4620 / CBS 123657 / FGSC 9075 / NRRL 31084 / PH-1) (Wheat head blight fungus) protein is FAD-linked oxidoreductase chry5.